A 483-amino-acid polypeptide reads, in one-letter code: Probable glycosyltransferase 6 (483 aa).

At 1-40 (MAASETAPFGVSAASKGGGGVAGARAQHGQLAVAGRVHDA) the chain is on the cytoplasmic side. The chain crosses the membrane as a helical; Signal-anchor for type II membrane protein span at residues 41 to 61 (LVFAAGAVAAVLVLLATASFL). The Lumenal portion of the chain corresponds to 62–483 (SPMPVTNLVA…PLPFDYPAAR (422 aa)). Asparagine 144 carries an N-linked (GlcNAc...) asparagine glycan.

Belongs to the glycosyltransferase 34 family.

It localises to the golgi apparatus membrane. Its function is as follows. Probable glycosyltransferase that may be involved in the biosynthesis of xyloglucan. The sequence is that of Probable glycosyltransferase 6 from Oryza sativa subsp. japonica (Rice).